Reading from the N-terminus, the 833-residue chain is Phosphatidylinositol-3-phosphatase myotubularin-2 (833 aa).

The 68-residue stretch at 42–109 (GSYSNLDCLL…VAIEKFNKLA (68 aa)) folds into the GRAM domain. The region spanning 181–647 (TNPKERLLNE…LAPTLWPQFH (467 aa)) is the Myotubularin phosphatase domain. Substrate is bound by residues 329–332 (NGAK), 354–355 (NI), 440–446 (CSDGWDR), and Arg-486. Cys-440 serves as the catalytic Phosphocysteine intermediate. The disordered stretch occupies residues 503–530 (QSSSARSFPSSPVRQSPGSAAAQSSSSS). The segment covering 504 to 530 (SSSARSFPSSPVRQSPGSAAAQSSSSS) has biased composition (low complexity). Residues 660-717 (ETEDQCRAMTVKYSEMKKEKEEAERKVDELSSAMESLNEELLNERDISRAARESAKRA) are a coiled coil. Residues 753–772 (KCSHSIPQKQSEDNTTDVSE) are disordered.

This sequence belongs to the protein-tyrosine phosphatase family. Non-receptor class myotubularin subfamily. Mostly expressed in flowers and roots, and, to a lower extent, in siliques and leaves.

The protein localises to the cytoplasm. It carries out the reaction a 1,2-diacyl-sn-glycero-3-phospho-(1D-myo-inositol-3-phosphate) + H2O = a 1,2-diacyl-sn-glycero-3-phospho-(1D-myo-inositol) + phosphate. The catalysed reaction is a 1,2-diacyl-sn-glycero-3-phospho-(1D-myo-inositol-3,5-bisphosphate) + H2O = a 1,2-diacyl-sn-glycero-3-phospho-(1D-myo-inositol-5-phosphate) + phosphate. Functionally, phosphatase with phosphoinositide 3'-phosphatase activity that can use phosphatidylinositol-3-phosphate (PtdIns3P) and phosphatidylinositol-3,5-diphosphate (PtdIns3,5P(2)) as substrates and produces phosphatidylinositol-5-phosphate (PtdIns5P); participates in pathway(s) that transfer gene regulatory signals to the nucleus. In Arabidopsis thaliana (Mouse-ear cress), this protein is Phosphatidylinositol-3-phosphatase myotubularin-2 (MTM2).